Here is a 306-residue protein sequence, read N- to C-terminus: 2-phospho-L-lactate transferase (306 aa).

Asp-48 lines the 7,8-didemethyl-8-hydroxy-5-deazariboflavin pocket.

Belongs to the CofD family. Homodimer. Mg(2+) is required as a cofactor.

The catalysed reaction is (2S)-lactyl-2-diphospho-5'-guanosine + 7,8-didemethyl-8-hydroxy-5-deazariboflavin = oxidized coenzyme F420-0 + GMP + H(+). It functions in the pathway cofactor biosynthesis; coenzyme F420 biosynthesis. Catalyzes the transfer of the 2-phospholactate moiety from (2S)-lactyl-2-diphospho-5'-guanosine to 7,8-didemethyl-8-hydroxy-5-deazariboflavin (FO) with the formation of oxidized coenzyme F420-0 and GMP. The protein is 2-phospho-L-lactate transferase of Methanococcoides burtonii (strain DSM 6242 / NBRC 107633 / OCM 468 / ACE-M).